Here is a 163-residue protein sequence, read N- to C-terminus: 5-hydroxymethyl-dUMP N-hydrolase (163 aa).

Residue Ala-2 is modified to N-acetylalanine. Gly-16 provides a ligand contact to 5-hydroxymethyl-dUMP. Ser-17 carries the post-translational modification Phosphoserine. 5-hydroxymethyl-dUMP is bound by residues Ile-18, Arg-19, Gly-20, Ser-87, Gly-89, and Glu-93. At Ser-87 the chain carries Phosphoserine. Ser-112, Ser-117, Ser-127, and Ser-158 each carry phosphoserine. Ser-117 is a 5-hydroxymethyl-dUMP binding site.

In terms of assembly, monomer and homodimer. Highly expressed in heart, kidney, liver and spleen. Weakly expressed in lung and skeletal muscle.

The protein localises to the cytoplasm. Its subcellular location is the nucleus. The catalysed reaction is 5-hydroxymethyl-dUMP + H2O = 5-hydroxymethyluracil + 2-deoxy-D-ribose 5-phosphate. Functionally, part of a nucleotide salvage pathway that eliminates epigenetically modified 5-hydroxymethyl-dCMP (hmdCMP) in a two-step process entailing deamination to cytotoxic 5-hydroxymethyl-dUMP (hmdUMP), followed by its hydrolysis into 5-hydroxymethyluracil (hmU) and 2-deoxy-D-ribose 5-phosphate (deoxyribosephosphate). Catalyzes the second step in that pathway, the hydrolysis of the N-glycosidic bond in hmdUMP, degrading this cytotoxic nucleotide to avoid its genomic integration. This is 5-hydroxymethyl-dUMP N-hydrolase from Rattus norvegicus (Rat).